The primary structure comprises 121 residues: Auxin-responsive protein SAUR32 (121 aa).

It belongs to the ARG7 family. In terms of tissue distribution, expressed in roots, leaves and stems.

The protein resides in the nucleus. Its subcellular location is the cytoplasm. In terms of biological role, may play a role in the apical hook development. This is Auxin-responsive protein SAUR32 from Arabidopsis thaliana (Mouse-ear cress).